Consider the following 419-residue polypeptide: Testin (419 aa).

Positions 92-199 (MILTNPVAAK…GDVKLPSEMN (108 aa)) constitute a PET domain. 2 disordered regions span residues 133–164 (EKQP…PSKC) and 199–222 (NAQG…GSKD). Basic and acidic residues predominate over residues 155-164 (PAHDQDPSKC). LIM zinc-binding domains are found at residues 232 to 295 (YSCY…CDSE), 297 to 357 (PRCA…NHAV), and 360 to 419 (QGCH…KMMS).

This sequence belongs to the prickle / espinas / testin family. In terms of assembly, interacts via LIM domain 1 with ZYX. Interacts (via LIM domain 3) with ENAH and VASP. Interacts with ALKBH4, talin, actin, alpha-actinin, GRIP1 and PXN. Interacts (via LIM domain 2) with ACTL7A (via N-terminus). Heterodimer with ACTL7A; the heterodimer interacts with ENAH to form a heterotrimer.

Its subcellular location is the cytoplasm. The protein localises to the cell junction. It is found in the focal adhesion. In terms of biological role, scaffold protein that may play a role in cell adhesion, cell spreading and in the reorganization of the actin cytoskeleton. Plays a role in the regulation of cell proliferation. May act as a tumor suppressor. This Rattus norvegicus (Rat) protein is Testin (Tes).